The sequence spans 282 residues: Acyl-CoA-binding domain-containing protein 6 (282 aa).

The interval Met-1 to Thr-39 is disordered. Ser-41 bears the Phosphoserine mark. In terms of domain architecture, ACB spans Leu-42–Pro-127. An acyl-CoA is bound by residues Tyr-69–Lys-73 and Lys-95. Residue Ser-106 is modified to Phosphoserine. Tyr-114 contributes to the an acyl-CoA binding site. ANK repeat units lie at residues Glu-191–Cys-220 and Glu-224–Leu-253.

Monomer.

The protein resides in the cytoplasm. The protein localises to the nucleus. Its function is as follows. Binds long-chain acyl-coenzyme A molecules with a strong preference for unsaturated C18:1-CoA, lower affinity for unsaturated C20:4-CoA, and very weak affinity for saturated C16:0-CoA. Does not bind fatty acids. Plays a role in protein N-myristoylation. The sequence is that of Acyl-CoA-binding domain-containing protein 6 (Acbd6) from Mus musculus (Mouse).